Consider the following 427-residue polypeptide: Zinc finger protein 2 (427 aa).

One can recognise a KRAB domain in the interval 14-85 (VTFEDVAVTF…GFHGSEEKTW (72 aa)). The tract at residues 111–142 (HRKQSSLCPKREIQTLTGGPEPEKESPKARTC) is disordered. 8 consecutive C2H2-type zinc fingers follow at residues 169 to 191 (QECSECGKTFFDHSSLIRHQRTH), 197 to 219 (YDCPECGKAFSHRSSLSRHLMFH), 225 to 247 (YECDACGKAFFDRSSLTVHQRIH), 253 to 275 (FKCNDCGKAFFDRSSLTRHQRIH), 281 to 303 (YECQQCGKAFSQKSILTRHLLTH), 309 to 331 (YECRDCGKAFYGVTSLNRHQKVH), 337 to 359 (YQCSECGKAFFDRSSLTQHQKIH), and 365 to 387 (YECGECGKAFSQRCRLTRHQRVH). The C2H2-type 9; degenerate zinc finger occupies 393–415 (FECSVCGKEFSSKSSIIQHQRRY).

Belongs to the krueppel C2H2-type zinc-finger protein family.

It is found in the nucleus. Its function is as follows. May be involved in transcriptional regulation. This is Zinc finger protein 2 from Mus musculus (Mouse).